Here is a 374-residue protein sequence, read N- to C-terminus: Chaperone protein DnaJ (374 aa).

The J domain maps to 4 to 69 (SYYEILEITQ…EKRAIYDRYG (66 aa)). The CR-type zinc finger occupies 136–213 (GCKKNIDFTY…CKGLGYNESK (78 aa)). Zn(2+)-binding residues include Cys-149, Cys-152, Cys-165, Cys-168, Cys-187, Cys-190, Cys-201, and Cys-204. CXXCXGXG motif repeat units follow at residues 149–156 (CKTCNGTG), 165–172 (CPKCQGRG), 187–194 (CPDCQGSG), and 201–208 (CSDCKGLG).

It belongs to the DnaJ family. Homodimer. The cofactor is Zn(2+).

It localises to the cytoplasm. In terms of biological role, participates actively in the response to hyperosmotic and heat shock by preventing the aggregation of stress-denatured proteins and by disaggregating proteins, also in an autonomous, DnaK-independent fashion. Unfolded proteins bind initially to DnaJ; upon interaction with the DnaJ-bound protein, DnaK hydrolyzes its bound ATP, resulting in the formation of a stable complex. GrpE releases ADP from DnaK; ATP binding to DnaK triggers the release of the substrate protein, thus completing the reaction cycle. Several rounds of ATP-dependent interactions between DnaJ, DnaK and GrpE are required for fully efficient folding. Also involved, together with DnaK and GrpE, in the DNA replication of plasmids through activation of initiation proteins. This is Chaperone protein DnaJ from Campylobacter jejuni subsp. jejuni serotype O:6 (strain 81116 / NCTC 11828).